Reading from the N-terminus, the 723-residue chain is ADP-ribosylation factor-binding protein GGA3 (723 aa).

The tract at residues 1–313 (MAEAEGESLE…GEVATLTLPD (313 aa)) is binds to ARF1 (in long isoform). Residues 16-146 (ATNPSNRQED…MLKRQGIVQS (131 aa)) enclose the VHS domain. Residues serine 159 and serine 275 each carry the phosphoserine modification. Residues 171 to 298 (DEEKSKLLAK…VINSYKTIIE (128 aa)) enclose the GAT domain. The tract at residues 299-593 (GQVINGEVAT…IHVPLESIKP (295 aa)) is unstructured hinge. Residues 339–384 (SSVLAPAPTPPSSGIPILPPPPQASGPPRSRSSSQAEATLGPSSTS) are disordered. A compositionally biased stretch (pro residues) spans 345–363 (APTPPSSGIPILPPPPQAS). Over residues 364-374 (GPPRSRSSSQA) the composition is skewed to low complexity. The short motif at 391-395 (DEELL) is the DXXLL element. The interval 428–464 (DFFSPRPGTAACGASDAPLLQPSAPSSSSSQAPLPPP) is disordered. Residues 441 to 459 (ASDAPLLQPSAPSSSSSQA) are compositionally biased toward low complexity. The GAE domain maps to 594 to 715 (SSALPVTAYD…TEVGEVDQFP (122 aa)).

This sequence belongs to the GGA protein family. Monomer. Interacts with GGA1 and GGA2. Binds to clathrin and activated ARFs, such as ARF1, ARF5 and ARF6. Binds RABEP1 and RABGEF1. Interacts with the membrane proteins M6PR/CD-MPR and IGF2R/CI-MPR and the accessory proteins SYNRG, EPN4, NECAP1, NECAP2 and AFTPH/aftiphilin. Interacts with TSG101 and UBC. Interacts with ADRA2B. Interacts with NTRK1; the interaction is independent of NTRK1 activation and ubiquitination. Interacts (via VHS domain) with BACE1 (via DXXLL motif). Post-translationally, phosphorylated by CK2 and dephosphorylated by PP2A. Phosphorylation of GGA3 allows the internal DXXLL motif to bind the VHS domain and to inhibit the recognition of cargo signals. Ubiquitinated. In terms of processing, proteolytically cleaved during apoptosis by CASP3. In terms of tissue distribution, ubiquitously expressed.

It is found in the golgi apparatus. Its subcellular location is the trans-Golgi network membrane. The protein resides in the endosome membrane. The protein localises to the early endosome membrane. It localises to the recycling endosome membrane. Plays a role in protein sorting and trafficking between the trans-Golgi network (TGN) and endosomes. Mediates the ARF-dependent recruitment of clathrin to the TGN and binds ubiquitinated proteins and membrane cargo molecules with a cytosolic acidic cluster-dileucine (DXXLL) motif. Mediates export of the GPCR receptor ADRA2B to the cell surface. nvolved in BACE1 transport and sorting as well as regulation of BACE1 protein levels. Regulates retrograde transport of BACE1 from endosomes to the trans-Golgi network via interaction through the VHS motif and dependent of BACE1 phosphorylation. Modulates BACE1 protein levels independently of the interaction between VHS domain and DXXLL motif through recognition of ubiquitination. Key player in a novel DXXLL-mediated endosomal sorting machinery to the recycling pathway that targets NTRK1 to the plasma membrane. The polypeptide is ADP-ribosylation factor-binding protein GGA3 (Homo sapiens (Human)).